The sequence spans 382 residues: Opsin Rh5 (382 aa).

Residues 1–49 (MHINGPSGPQAYVNDSLGDGSVFPMGHGYPAEYQHMVHAHWRGFREAPI) lie on the Extracellular side of the membrane. N-linked (GlcNAc...) asparagine glycosylation is present at Asn-14. A helical membrane pass occupies residues 50–76 (YYHAGFYIAFIVLMLSSIFGNGLVIWI). The Cytoplasmic portion of the chain corresponds to 77 to 88 (FSTSKSLRTPSN). A helical transmembrane segment spans residues 89 to 112 (LLILNLAIFDLFMCTNMPHYLINA). At 113–127 (TVGYIVGGDLGCDIY) the chain is on the extracellular side. A disulfide bridge connects residues Cys-124 and Cys-201. Residues 128–147 (ALNGGISGMGASITNAFIAF) traverse the membrane as a helical segment. At 148–165 (DRYKTISNPIDGRLSYGQ) the chain is on the cytoplasmic side. Residues 166 to 190 (IVLLILFTWLWATPFSVLPLFQIWG) form a helical membrane-spanning segment. Residues 191–214 (RYQPEGFLTTCSFDYLTNTDENRL) are Extracellular-facing. The helical transmembrane segment at 215-242 (FVRTIFVWSYVIPMTMILVSYYKLFTHV) threads the bilayer. At 243-278 (RVHEKMLAEQAKKMNVKSLSANANADNMSVELRIAK) the chain is on the cytoplasmic side. A helical membrane pass occupies residues 279–302 (AALIIYMLFILAWTPYSVVALIGC). Topologically, residues 303–310 (FGEQQLIT) are extracellular. A helical transmembrane segment spans residues 311 to 335 (PFVSMLPCLACKSVSCLDPWVYATS). The residue at position 322 (Lys-322) is an N6-(retinylidene)lysine. At 336-382 (HPKYRLELERRLPWLGIREKHATSGTSGGQESVASVSGDTLALSVQN) the chain is on the cytoplasmic side. The interval 357 to 382 (ATSGTSGGQESVASVSGDTLALSVQN) is disordered. Residues 358–382 (TSGTSGGQESVASVSGDTLALSVQN) are compositionally biased toward polar residues.

It belongs to the G-protein coupled receptor 1 family. Opsin subfamily. In terms of processing, phosphorylated on some or all of the serine and threonine residues present in the C-terminal region. As to expression, expressed specifically in the retina. Each Drosophila eye is composed of 800 facets or ommatidia. Each ommatidium contains 8 photoreceptor cells (R1-R8), the R1 to R6 cells are outer cells, while R7 and R8 are inner cells. Rh5 is expressed only in R8 photoreceptor cells in a subset of ommatidia.

It localises to the cell projection. The protein localises to the rhabdomere membrane. Its function is as follows. Visual pigments are the light-absorbing molecules that mediate vision. They consist of an apoprotein, opsin, covalently linked to cis-retinal. This chain is Opsin Rh5 (Rh5), found in Drosophila melanogaster (Fruit fly).